Consider the following 307-residue polypeptide: Fructokinase (307 aa).

Belongs to the carbohydrate kinase PfkB family.

It catalyses the reaction D-fructose + ATP = D-fructose 6-phosphate + ADP + H(+). Its function is as follows. Involved in sucrose metabolism. This is Fructokinase (scrK) from Klebsiella pneumoniae.